Here is a 309-residue protein sequence, read N- to C-terminus: DDRGK domain-containing protein 1 (309 aa).

Residues 1–2 (MD) lie on the Lumenal side of the membrane. The helical transmembrane segment at 3-23 (LIILVGIAVALLVVIVTLYLL) threads the bilayer. The Cytoplasmic portion of the chain corresponds to 24 to 309 (QKKNAAPETK…ISAGGGEASS (286 aa)). Disordered regions lie at residues 32–53 (TKVA…VPRR) and 79–175 (ALPA…KEER). Acidic residues predominate over residues 87–96 (DHEDEGQVDG). Residues 107–175 (LDEKMGAKKR…DAERLAKEER (69 aa)) are compositionally biased toward basic and acidic residues. The stretch at 120 to 177 (EAKEQKRLQREQELHDREQRKVKEAKEEAERKQQEDLEAEAERKRVDAERLAKEERER) forms a coiled coil.

This sequence belongs to the DDRGK1 family. In terms of assembly, interacts with Atg9; the interaction is transient.

It is found in the endoplasmic reticulum membrane. In terms of biological role, substrate adapter for ufmylation, the covalent attachment of the ubiquitin-like modifier UFM1 to substrate proteins. Required for ufmylation of Atg9; protects the nervous system during aging, possibly by stabilizing Atg9 and supporting its function. The protein is DDRGK domain-containing protein 1 of Drosophila melanogaster (Fruit fly).